The following is a 339-amino-acid chain: Zinc metalloprotease MJ0392 (339 aa).

2 helical membrane passes run 10-30 and 33-53; these read IMGI…VIIG and IMNN…SVVL. H54 lines the Zn(2+) pocket. E55 is a catalytic residue. Zn(2+) is bound at residue H58. A run of 2 helical transmembrane segments spans residues 96–116 and 125–145; these read IAGP…SQFF and LLYT…IPAF. D148 provides a ligand contact to Zn(2+). A run of 2 helical transmembrane segments spans residues 180–200 and 251–271; these read IMLL…SLFV and YFGY…IGNI. CBS domains are found at residues 226–281 and 281–335; these read MTPN…VRDY and YMEK…ELKE.

The protein belongs to the peptidase M50B family. In terms of assembly, monomer. The cofactor is Zn(2+).

It localises to the cell membrane. Inhibited by 1,10-phenanthroline. Its function is as follows. A site-2 regulated intramembrane protease (S2P) that cleaves type-2 transmembrane proteins within their membrane-spanning domains; its endogenous substrate is unknown. Regulated intramembrane proteolysis (RIP) occurs when an extracytoplasmic signal triggers a concerted proteolytic cascade to transmit information and elicit cellular responses. A membrane-spanning regulatory substrate protein is first cut extracytoplasmically (site-1 protease, S1P), then within the membrane itself (site-2 protease, S2P, this enzyme), while cytoplasmic proteases finish degrading the regulatory protein, liberating the effector protein. Possible signals, S1P and substrates are unknown in this organism. The polypeptide is Zinc metalloprotease MJ0392 (Methanocaldococcus jannaschii (strain ATCC 43067 / DSM 2661 / JAL-1 / JCM 10045 / NBRC 100440) (Methanococcus jannaschii)).